The chain runs to 97 residues: Large ribosomal subunit protein uL23 (97 aa).

The protein belongs to the universal ribosomal protein uL23 family. As to quaternary structure, part of the 50S ribosomal subunit. Contacts protein L29, and trigger factor when it is bound to the ribosome.

Its function is as follows. One of the early assembly proteins it binds 23S rRNA. One of the proteins that surrounds the polypeptide exit tunnel on the outside of the ribosome. Forms the main docking site for trigger factor binding to the ribosome. This is Large ribosomal subunit protein uL23 from Clostridium perfringens (strain SM101 / Type A).